Consider the following 261-residue polypeptide: Ribosome biogenesis protein NSA2 (261 aa).

Basic and acidic residues predominate over residues 1–22 (MPQNEYIEKHIKQHGRRLDHEE). Disordered stretches follow at residues 1–39 (MPQNEYIEKHIKQHGRRLDHEERKRKRAAREGHRVAKDA) and 61–85 (MKKKIKAHQESKVKGPSTPKENDGE). The Nuclear localization signal signature appears at 15 to 22 (GRRLDHEE).

It belongs to the eukaryotic ribosomal protein eS8 family. Ribosome biogenesis protein NSA2 subfamily. In terms of assembly, component of the pre-66S ribosomal particle. Interacts with NOP7 and RRP1. Interacts with RSA4 (via WD repeats).

It is found in the nucleus. The protein localises to the nucleolus. In terms of biological role, involved in the biogenesis of the 60S ribosomal subunit. May play a part in the quality control of pre-60S particles. The chain is Ribosome biogenesis protein NSA2 (NSA2) from Meyerozyma guilliermondii (strain ATCC 6260 / CBS 566 / DSM 6381 / JCM 1539 / NBRC 10279 / NRRL Y-324) (Yeast).